A 243-amino-acid polypeptide reads, in one-letter code: Probable fructoselysine utilization operon transcriptional repressor (243 aa).

Positions Q10–Q78 constitute an HTH gntR-type domain. Residues E38 to S57 constitute a DNA-binding region (H-T-H motif).

It functions in the pathway carbohydrate metabolism; fructoselysine degradation [regulation]. Its function is as follows. May regulate the transcription of the frlABCDR operon, involved in the utilization of fructoselysine and psicoselysine. The protein is Probable fructoselysine utilization operon transcriptional repressor of Escherichia coli (strain K12).